The following is a 243-amino-acid chain: 3-deoxy-manno-octulosonate cytidylyltransferase (243 aa).

It belongs to the KdsB family.

The protein localises to the cytoplasm. The catalysed reaction is 3-deoxy-alpha-D-manno-oct-2-ulosonate + CTP = CMP-3-deoxy-beta-D-manno-octulosonate + diphosphate. The protein operates within nucleotide-sugar biosynthesis; CMP-3-deoxy-D-manno-octulosonate biosynthesis; CMP-3-deoxy-D-manno-octulosonate from 3-deoxy-D-manno-octulosonate and CTP: step 1/1. It functions in the pathway bacterial outer membrane biogenesis; lipopolysaccharide biosynthesis. Its function is as follows. Activates KDO (a required 8-carbon sugar) for incorporation into bacterial lipopolysaccharide in Gram-negative bacteria. The chain is 3-deoxy-manno-octulosonate cytidylyltransferase from Helicobacter pylori (strain HPAG1).